A 97-amino-acid chain; its full sequence is Protein CYSTEINE-RICH TRANSMEMBRANE MODULE 7 (97 aa).

Residues 1 to 27 (MASYHVSHDSYQSPGPSPLYQPIIEAP) are disordered. Residues 15–27 (GPSPLYQPIIEAP) are compositionally biased toward pro residues. Residues 68-88 (YVGCFPFLRSCLTTLCCCWFV) form a helical membrane-spanning segment.

This sequence belongs to the CYSTM1 family. As to quaternary structure, homodimer and heterodimers. Interacts with CYSTM3, CYSTM4, CYSTM5, CYSTM6, CYSTM10, WIH1/CYSTM13 and CYSTM11. Binds weakly to CYSTM1, CYSTM2 and CYSTM12. In terms of tissue distribution, mostly expressed in siliques and, to a lower extent, in stems, roots, leaves and flowers.

It is found in the cell membrane. Its function is as follows. Involved in resistance to abiotic stress. The chain is Protein CYSTEINE-RICH TRANSMEMBRANE MODULE 7 from Arabidopsis thaliana (Mouse-ear cress).